The sequence spans 387 residues: Involucrin (387 aa).

Disordered stretches follow at residues M1 to G319 and V347 to E387. Residues N28–P37 are compositionally biased toward polar residues. Positions Q62–Q71 are enriched in low complexity. Composition is skewed to basic and acidic residues over residues K85–P96, Q104–E115, Q147–Q179, and Q231–L245.

It belongs to the involucrin family. As to quaternary structure, directly or indirectly cross-linked to cornifelin (CNFN). Post-translationally, substrate of transglutaminase. Specific glutamines or lysines are cross-linked to keratins, desmoplakin and to inter involucrin molecules. As to expression, keratinocytes of epidermis and other stratified squamous epithelia.

It is found in the cytoplasm. Its function is as follows. Part of the insoluble cornified cell envelope (CE) of stratified squamous epithelia. This is Involucrin (IVL) from Cephalopachus bancanus (Western tarsier).